Here is a 519-residue protein sequence, read N- to C-terminus: T-complex protein 11-like protein 2 (519 aa).

The tract at residues 1 to 57 is disordered; it reads MPFNGEKQCVSEDQPSDSDSSRFSESMASLSDYECSRQSFTSDSSSKSSSPASTSPP. Serine 16 bears the Phosphoserine mark. 2 stretches are compositionally biased toward low complexity: residues 17–29 and 36–55; these read DSDS…SMAS and SRQS…ASTS.

The protein belongs to the TCP11 family. As to quaternary structure, interacts with FMNL2; this interaction promotes muscle-derived satellite cell (MDSC) migration and differentiation.

The protein localises to the cytoplasm. The protein resides in the cytoskeleton. Its function is as follows. Promotes the migration of muscle-derived satellite cells (MDSCs) during differentiation throught interaction with FMNL2 and therefore may participate in microfilament assembly. The protein is T-complex protein 11-like protein 2 of Bos taurus (Bovine).